A 564-amino-acid polypeptide reads, in one-letter code: Potassium-transporting ATPase potassium-binding subunit (564 aa).

A run of 10 helical transmembrane segments spans residues 4 to 24 (YDYW…PFLG), 67 to 87 (MLAL…ILLF), 135 to 155 (AGLT…LVAL), 179 to 199 (LYGL…QGVP), 254 to 274 (WANL…VFTF), 286 to 306 (AILG…LWAE), 382 to 402 (AGMY…GLMI), 420 to 440 (LLVV…AIAA), 487 to 507 (LMLG…VLAL), and 528 to 548 (GPLF…LTFL).

The protein belongs to the KdpA family. The system is composed of three essential subunits: KdpA, KdpB and KdpC.

It is found in the cell inner membrane. In terms of biological role, part of the high-affinity ATP-driven potassium transport (or Kdp) system, which catalyzes the hydrolysis of ATP coupled with the electrogenic transport of potassium into the cytoplasm. This subunit binds the periplasmic potassium ions and delivers the ions to the membrane domain of KdpB through an intramembrane tunnel. The protein is Potassium-transporting ATPase potassium-binding subunit of Pseudomonas fluorescens (strain SBW25).